We begin with the raw amino-acid sequence, 207 residues long: Ion-translocating oxidoreductase complex subunit G (207 aa).

Residues 11 to 31 (GILLGFIALLCTIISAGIYFL) traverse the membrane as a helical segment. An FMN phosphoryl threonine modification is found at T175.

It belongs to the RnfG family. The complex is composed of six subunits: RnfA, RnfB, RnfC, RnfD, RnfE and RnfG. Requires FMN as cofactor.

The protein resides in the cell inner membrane. Functionally, part of a membrane-bound complex that couples electron transfer with translocation of ions across the membrane. The chain is Ion-translocating oxidoreductase complex subunit G from Haemophilus influenzae (strain PittEE).